Here is a 208-residue protein sequence, read N- to C-terminus: Putative archaetidylserine decarboxylase proenzyme (208 aa).

Serine 172 serves as the catalytic Schiff-base intermediate with substrate; via pyruvic acid. Pyruvic acid (Ser); by autocatalysis is present on serine 172.

Belongs to the phosphatidylserine decarboxylase family. PSD-A subfamily. Heterodimer of a large membrane-associated beta subunit and a small pyruvoyl-containing alpha subunit. Pyruvate is required as a cofactor. In terms of processing, is synthesized initially as an inactive proenzyme. Formation of the active enzyme involves a self-maturation process in which the active site pyruvoyl group is generated from an internal serine residue via an autocatalytic post-translational modification. Two non-identical subunits are generated from the proenzyme in this reaction, and the pyruvate is formed at the N-terminus of the alpha chain, which is derived from the carboxyl end of the proenzyme. The post-translation cleavage follows an unusual pathway, termed non-hydrolytic serinolysis, in which the side chain hydroxyl group of the serine supplies its oxygen atom to form the C-terminus of the beta chain, while the remainder of the serine residue undergoes an oxidative deamination to produce ammonia and the pyruvoyl prosthetic group on the alpha chain.

The protein localises to the cell membrane. The enzyme catalyses archaetidylserine + H(+) = archaetidylethanolamine + CO2. Its function is as follows. Catalyzes the formation of archaetidylethanolamine (PtdEtn) from archaetidylserine (PtdSer). This chain is Putative archaetidylserine decarboxylase proenzyme, found in Methanosarcina mazei (strain ATCC BAA-159 / DSM 3647 / Goe1 / Go1 / JCM 11833 / OCM 88) (Methanosarcina frisia).